A 435-amino-acid chain; its full sequence is Eukaryotic peptide chain release factor subunit 1 (435 aa).

It belongs to the eukaryotic release factor 1 family. In terms of assembly, heterodimer of two subunits, one of which binds GTP.

The protein localises to the cytoplasm. Functionally, directs the termination of nascent peptide synthesis (translation) in response to the termination codons UAA, UAG and UGA. This chain is Eukaryotic peptide chain release factor subunit 1 (SU2), found in Podospora anserina (Pleurage anserina).